A 435-amino-acid polypeptide reads, in one-letter code: UPF0053 protein Rv2366c (435 aa).

Residues 1–185 (MTGYYQLLGS…QQRGVVAADE (185 aa)) enclose the CNNM transmembrane domain. A run of 2 helical transmembrane segments spans residues 7 to 27 (LLGS…DAAI) and 89 to 109 (VWGL…VVGV). CBS domains lie at 204–267 (MVPR…GRET) and 272–329 (VMRP…IADE).

This sequence belongs to the UPF0053 family.

Its subcellular location is the cell membrane. The sequence is that of UPF0053 protein Rv2366c from Mycobacterium tuberculosis (strain ATCC 25618 / H37Rv).